The chain runs to 261 residues: 4-phosphopantoate--beta-alanine ligase (261 aa).

ATP-binding positions include Arg17, Arg39, 181 to 183 (DLN), 187 to 188 (RS), and 199 to 200 (NI).

This sequence belongs to the archaeal phosphopantothenate synthetase family. Homodimer.

The catalysed reaction is (R)-4-phosphopantoate + beta-alanine + ATP = (R)-4'-phosphopantothenate + AMP + diphosphate + H(+). It participates in cofactor biosynthesis; coenzyme A biosynthesis. With respect to regulation, activity is not affected by 4'-phosphopantothenate or CoA/acetyl-CoA. Catalyzes the condensation of (R)-4-phosphopantoate and beta-alanine to 4'-phosphopantothenate in the CoA biosynthesis pathway. Cannot use (R)-pantoate as substrate and thus does not display pantothenate synthetase (PS) activity. Displays strict specificity for its natural substrates, 4-phosphopantoate, ATP and beta-alanine. In Thermococcus kodakarensis (strain ATCC BAA-918 / JCM 12380 / KOD1) (Pyrococcus kodakaraensis (strain KOD1)), this protein is 4-phosphopantoate--beta-alanine ligase.